Consider the following 418-residue polypeptide: Geranylgeranyl pyrophosphate synthase (418 aa).

Polar residues predominate over residues 51–64; the sequence is TSSTGIPTSLNATP. The segment at 51–73 is disordered; the sequence is TSSTGIPTSLNATPTKPVLRPVP. Positions 143, 146, and 175 each coordinate isopentenyl diphosphate. Asp-182 and Asp-186 together coordinate Mg(2+). Arg-191 serves as a coordination point for dimethylallyl diphosphate. An isopentenyl diphosphate-binding site is contributed by Arg-192. 5 residues coordinate dimethylallyl diphosphate: Lys-269, Thr-270, Gln-305, Lys-322, and Lys-332.

This sequence belongs to the FPP/GGPP synthase family. Mg(2+) serves as cofactor.

It localises to the cytoplasm. It carries out the reaction isopentenyl diphosphate + dimethylallyl diphosphate = (2E)-geranyl diphosphate + diphosphate. The catalysed reaction is isopentenyl diphosphate + (2E)-geranyl diphosphate = (2E,6E)-farnesyl diphosphate + diphosphate. The enzyme catalyses isopentenyl diphosphate + (2E,6E)-farnesyl diphosphate = (2E,6E,10E)-geranylgeranyl diphosphate + diphosphate. The protein operates within isoprenoid biosynthesis; farnesyl diphosphate biosynthesis; farnesyl diphosphate from geranyl diphosphate and isopentenyl diphosphate: step 1/1. It participates in isoprenoid biosynthesis; geranyl diphosphate biosynthesis; geranyl diphosphate from dimethylallyl diphosphate and isopentenyl diphosphate: step 1/1. Its pathway is isoprenoid biosynthesis; geranylgeranyl diphosphate biosynthesis; geranylgeranyl diphosphate from farnesyl diphosphate and isopentenyl diphosphate: step 1/1. Its function is as follows. Catalyzes the trans-addition of the three molecules of IPP onto DMAPP to form geranylgeranyl pyrophosphate. In Fusarium fujikuroi (Bakanae and foot rot disease fungus), this protein is Geranylgeranyl pyrophosphate synthase (GGS).